Reading from the N-terminus, the 410-residue chain is 2-oxoisovalerate dehydrogenase subunit alpha (410 aa).

It belongs to the BCKDHA family. Heterodimer of an alpha and a beta chain. Requires thiamine diphosphate as cofactor.

The enzyme catalyses N(6)-[(R)-lipoyl]-L-lysyl-[protein] + 3-methyl-2-oxobutanoate + H(+) = N(6)-[(R)-S(8)-2-methylpropanoyldihydrolipoyl]-L-lysyl-[protein] + CO2. The branched-chain alpha-keto dehydrogenase complex catalyzes the overall conversion of alpha-keto acids to acyl-CoA and CO(2). It contains multiple copies of three enzymatic components: branched-chain alpha-keto acid decarboxylase (E1), lipoamide acyltransferase (E2) and lipoamide dehydrogenase (E3). This Pseudomonas aeruginosa (strain ATCC 15692 / DSM 22644 / CIP 104116 / JCM 14847 / LMG 12228 / 1C / PRS 101 / PAO1) protein is 2-oxoisovalerate dehydrogenase subunit alpha (bkdA1).